A 485-amino-acid polypeptide reads, in one-letter code: Skb1 localization factor 1 (485 aa).

Residues 1-200 (MSSIIQNPIE…VDDSDLTPHT (200 aa)) form a sufficient for interaction with Skb1 region. Disordered stretches follow at residues 117 to 230 (NAAN…MSRN), 286 to 416 (ETQH…LRRS), and 446 to 466 (TTQE…KPEK). The span at 171-182 (SRSSRYSKTSDL) shows a compositional bias: polar residues. Residues 189-198 (RFVDDSDLTP) show a composition bias toward basic and acidic residues. Polar residues-rich tracts occupy residues 218–230 (GRSS…MSRN) and 341–363 (VGSS…QQDS). Serine 222 carries the post-translational modification Phosphoserine. The span at 371 to 393 (SERSYRRVRDQYLSKPRLSDKNR) shows a compositional bias: basic and acidic residues. The span at 394 to 416 (YSTFSEFPGQGTPSASQSNLRRS) shows a compositional bias: polar residues. The segment covering 447–464 (TQERKPVVKPDSIKTVKP) has biased composition (basic and acidic residues). The interval 451–485 (KPVVKPDSIKTVKPEKKKSKGFFKKLMHKISHIFD) is required and sufficient for plasma membrane anchoring; lysine-rich, may bind to anionic lipids in the plasma membrane. The residue at position 458 (serine 458) is a Phosphoserine.

In terms of assembly, interacts with Skb1.

It localises to the cell membrane. In terms of biological role, acts as a membrane anchor for Skb1 in forming plasma membrane microdomains. Promotes mitotic entry by sequestering mitotic inhibitor Skb1 from its regulatory targets Cdr1 and Wee1. The chain is Skb1 localization factor 1 from Schizosaccharomyces pombe (strain 972 / ATCC 24843) (Fission yeast).